Consider the following 335-residue polypeptide: GTPase Obg (335 aa).

Positions 1–158 (MFLDQITIEL…RQVELELKLI (158 aa)) constitute an Obg domain. The OBG-type G domain maps to 159–334 (ADIGLVGFPN…LNSLFTNRLS (176 aa)). GTP contacts are provided by residues 165–172 (GFPNAGKS), 190–194 (FTTLQ), 215–218 (DIPG), 285–288 (NKID), and 315–317 (SGL). 2 residues coordinate Mg(2+): S172 and T192.

This sequence belongs to the TRAFAC class OBG-HflX-like GTPase superfamily. OBG GTPase family. As to quaternary structure, monomer. The cofactor is Mg(2+).

The protein resides in the cytoplasm. In terms of biological role, an essential GTPase which binds GTP, GDP and possibly (p)ppGpp with moderate affinity, with high nucleotide exchange rates and a fairly low GTP hydrolysis rate. Plays a role in control of the cell cycle, stress response, ribosome biogenesis and in those bacteria that undergo differentiation, in morphogenesis control. The chain is GTPase Obg from Chlamydia caviae (strain ATCC VR-813 / DSM 19441 / 03DC25 / GPIC) (Chlamydophila caviae).